A 359-amino-acid polypeptide reads, in one-letter code: Diacyltrehalose acyltransferase Chp2 (359 aa).

The chain crosses the membrane as a helical span at residues valine 4–isoleucine 24. In terms of domain architecture, PE-PPE spans proline 79–tyrosine 316.

It belongs to the mycobacterial PPE family.

Its subcellular location is the cell inner membrane. With respect to regulation, activity is probably potentiated by the DAT/PAT transporter MmpL10. Inhibited by the lipase inhibitor tetrahydrolipstatin (THL). Functionally, involved in the final steps of polyacyltrehalose (PAT) biosynthesis. Catalyzes the transfer of three mycolipenoyl groups onto diacyltrehalose (DAT) to form PAT. The chain is Diacyltrehalose acyltransferase Chp2 from Mycobacterium tuberculosis (strain ATCC 25618 / H37Rv).